A 724-amino-acid polypeptide reads, in one-letter code: Probable ATP-dependent RNA helicase DDX4 (724 aa).

The span at 1–11 (MSGQEDWESEI) shows a compositional bias: acidic residues. Disordered stretches follow at residues 1-25 (MSGQ…SNSE) and 37-241 (SSNN…QGPR). Positions 108-130 (SNGKQESGDFTNDDNRTIDDNRR) are enriched in basic and acidic residues. A compositionally biased stretch (polar residues) spans 168–182 (EQSGFTSNDGFNNET). The Q motif signature appears at 286–314 (LTFEEANLCDSLAKNVCKSGYVKLTPIQK). One can recognise a Helicase ATP-binding domain in the interval 317 to 500 (IPIIVAGRDL…REILKPDYLF (184 aa)). 330–337 (AQTGSGKT) is a binding site for ATP. The DEAD box signature appears at 444–447 (DEAD). The region spanning 512-675 (DVEQMVIEVD…EVPAWLEEVA (164 aa)) is the Helicase C-terminal domain. Over residues 683 to 692 (AYNPRSNKFA) the composition is skewed to polar residues. Residues 683–724 (AYNPRSNKFASTDDRKRGDSRGDYSTSGFSPSAAQAEEEDWG) form a disordered region. Over residues 693–704 (STDDRKRGDSRG) the composition is skewed to basic and acidic residues. The span at 705 to 715 (DYSTSGFSPSA) shows a compositional bias: polar residues.

This sequence belongs to the DEAD box helicase family. DDX4/VASA subfamily.

It localises to the cytoplasm. The enzyme catalyses ATP + H2O = ADP + phosphate + H(+). Its function is as follows. Probable ATP-dependent RNA helicase required during spermatogenesis to repress transposable elements and preventing their mobilization, which is essential for the germline integrity. Acts via the piRNA metabolic process, which mediates the repression of transposable elements during meiosis by forming complexes composed of piRNAs and Piwi proteins and governs the methylation and subsequent repression of transposons. Involved in the secondary piRNAs metabolic process, the production of piRNAs in fetal male germ cells through a ping-pong amplification cycle. This chain is Probable ATP-dependent RNA helicase DDX4, found in Pelophylax lessonae (Pool frog).